A 145-amino-acid polypeptide reads, in one-letter code: D-aminoacyl-tRNA deacylase (145 aa).

Residues 137 to 138 (GP) carry the Gly-cisPro motif, important for rejection of L-amino acids motif.

This sequence belongs to the DTD family. As to quaternary structure, homodimer.

It is found in the cytoplasm. It catalyses the reaction glycyl-tRNA(Ala) + H2O = tRNA(Ala) + glycine + H(+). It carries out the reaction a D-aminoacyl-tRNA + H2O = a tRNA + a D-alpha-amino acid + H(+). In terms of biological role, an aminoacyl-tRNA editing enzyme that deacylates mischarged D-aminoacyl-tRNAs. Also deacylates mischarged glycyl-tRNA(Ala), protecting cells against glycine mischarging by AlaRS. Acts via tRNA-based rather than protein-based catalysis; rejects L-amino acids rather than detecting D-amino acids in the active site. By recycling D-aminoacyl-tRNA to D-amino acids and free tRNA molecules, this enzyme counteracts the toxicity associated with the formation of D-aminoacyl-tRNA entities in vivo and helps enforce protein L-homochirality. This chain is D-aminoacyl-tRNA deacylase, found in Yersinia pestis bv. Antiqua (strain Antiqua).